Consider the following 428-residue polypeptide: AP-1 complex subunit mu-1 (428 aa).

Residues 170–426 form the MHD domain; it reads KNEVFLDVIE…ITMAGEYELR (257 aa).

It belongs to the adaptor complexes medium subunit family. In terms of assembly, adaptor protein complex 1 (AP-1) is a heterotetramer composed of two large adaptins (gamma-type subunit and beta-type subunit), a medium adaptin (mu-type subunit) and a small adaptin (sigma-type subunit).

The protein resides in the golgi apparatus. It is found in the cytoplasmic vesicle. Its subcellular location is the clathrin-coated vesicle membrane. Its function is as follows. Subunit of clathrin-associated adaptor protein complex 1 that plays a role in protein sorting at the trans-Golgi network and early endosomes (TGN/EE). The AP complexes mediate the recruitment of clathrin to membranes and the recognition of sorting signals within the cytosolic tails of transmembrane cargo molecules. Functions redundantly with AP1M2 in multiple post-Golgi trafficking pathways leading from the TGN to the vacuole, the plasma membrane, and the cell-division plane. The chain is AP-1 complex subunit mu-1 (AP1M1) from Arabidopsis thaliana (Mouse-ear cress).